A 666-amino-acid polypeptide reads, in one-letter code: Neopullulanase 1 (666 aa).

Positions 1–29 (MIKLLKPMSLSILLVFILSFSFPFPTAKA) are cleaved as a signal peptide. The Ca(2+) site is built by alanine 31, aspartate 33, asparagine 35, aspartate 71, aspartate 125, asparagine 174, aspartate 176, asparagine 179, aspartate 180, glycine 216, and aspartate 218. Residue histidine 296 coordinates substrate. The Ca(2+) site is built by aspartate 305, asparagine 309, phenylalanine 310, serine 312, and glutamate 317. Arginine 383 is a substrate binding site. Aspartate 385 (nucleophile) is an active-site residue. The Proton donor role is filled by glutamate 425. Residues 500–501 (HD), aspartate 545, and arginine 549 contribute to the substrate site.

The protein belongs to the glycosyl hydrolase 13 family. Ca(2+) is required as a cofactor.

The protein resides in the secreted. The enzyme catalyses Hydrolysis of pullulan to panose (6-alpha-D-glucosylmaltose).. Its function is as follows. Endohydrolysis of 1,4-alpha-glucosidic linkages in pullulan to form panose. Also hydrolyzes cyclodextrins. This Thermoactinomyces vulgaris protein is Neopullulanase 1 (tvaI).